We begin with the raw amino-acid sequence, 360 residues long: Alpha-2-macroglobulin receptor-associated protein (360 aa).

The N-terminal stretch at 1–28 is a signal peptide; that stretch reads MAPRRERVSTLPRLQLLVLLLLPLMLVP. S53 and S138 each carry phosphoserine. The stretch at 184–302 forms a coiled coil; the sequence is EKIQEYNVLL…KHNHYQKQLE (119 aa). An LDL receptor binding region spans residues 240–356; that stretch reads RLRKVSHQGY…DLSSRVSRAR (117 aa). An N-linked (GlcNAc...) asparagine glycan is attached at N271. The Prevents secretion from ER signature appears at 357 to 360; that stretch reads HNEL.

It belongs to the alpha-2-MRAP family. Interacts with the LRP1/alpha-2-macroglobulin receptor heavy and light chains; the interaction is transient and coincides with a reduction of ligand binding by the receptor. Interacts with LRP2/glycoprotein 330. Interacts with LRP1B; binding is followed by internalization and degradation. Interacts with LDLR. Interacts with SORL1. Interacts with LRP1; this interaction is followed by rapid internalization. Post-translationally, N-glycosylated. Highly expressed in PYS-2 parietal endoderm cells and in the kidney. The RNA level increased about 10-fold during differentiation of F9 embryonal carcinoma cells to parietal endoderm cells.

It is found in the rough endoplasmic reticulum lumen. Its subcellular location is the endoplasmic reticulum-Golgi intermediate compartment lumen. The protein resides in the golgi apparatus. It localises to the cis-Golgi network. The protein localises to the golgi apparatus lumen. It is found in the endosome lumen. Its subcellular location is the cell surface. In terms of biological role, molecular chaperone for LDL receptor-related proteins that may regulate their ligand binding activity along the secretory pathway. This Mus musculus (Mouse) protein is Alpha-2-macroglobulin receptor-associated protein (Lrpap1).